A 166-amino-acid polypeptide reads, in one-letter code: NADPH-dependent 7-cyano-7-deazaguanine reductase (166 aa).

The active-site Thioimide intermediate is the cysteine 57. The active-site Proton donor is aspartate 64. Substrate-binding positions include 79–81 (VES) and 98–99 (HE).

This sequence belongs to the GTP cyclohydrolase I family. QueF type 1 subfamily.

It localises to the cytoplasm. The enzyme catalyses 7-aminomethyl-7-carbaguanine + 2 NADP(+) = 7-cyano-7-deazaguanine + 2 NADPH + 3 H(+). Its pathway is tRNA modification; tRNA-queuosine biosynthesis. In terms of biological role, catalyzes the NADPH-dependent reduction of 7-cyano-7-deazaguanine (preQ0) to 7-aminomethyl-7-deazaguanine (preQ1). In Staphylococcus aureus (strain JH1), this protein is NADPH-dependent 7-cyano-7-deazaguanine reductase.